The chain runs to 173 residues: Invasion protein B homolog BruAb1_0366 (173 aa).

The first 23 residues, 1–23, serve as a signal peptide directing secretion; the sequence is MKNYRAIGLAFTFTALSSLSAFA.

Belongs to the IalB family.

In Brucella abortus biovar 1 (strain 9-941), this protein is Invasion protein B homolog BruAb1_0366.